Consider the following 1001-residue polypeptide: Protein MEI2-like 4 (1001 aa).

The tract at residues His-100–Ser-120 is disordered. 2 consecutive RRM domains span residues Arg-275–Pro-348 and Gly-360–Leu-433. Disordered regions lie at residues Gly-767–Tyr-815 and Phe-941–Asp-1001. The segment covering Pro-793–Asp-803 has biased composition (basic and acidic residues). Positions Asp-978–Asp-994 are enriched in polar residues.

Its function is as follows. Probable RNA-binding protein that may play a role in growth regulation. The chain is Protein MEI2-like 4 (ML4) from Oryza sativa subsp. japonica (Rice).